Consider the following 487-residue polypeptide: Nitrate reductase beta chain (487 aa).

4Fe-4S ferredoxin-type domains are found at residues 7–36 (IGMVMNLDKCIGCHTCSVTCKNTWTNRSGA), 172–203 (VFMMYLPRICEHCINPACVSSCPSGAMYKREE), and 205–234 (GIVLVDQNACRSWRYCVSSCPYKKVYFNWQ). Residues cysteine 16, cysteine 19, cysteine 22, cysteine 26, cysteine 181, cysteine 184, and cysteine 189 each coordinate [4Fe-4S] cluster. [3Fe-4S] cluster is bound by residues cysteine 193, cysteine 214, and cysteine 220. The [4Fe-4S] cluster site is built by cysteine 224, cysteine 241, cysteine 244, cysteine 256, and cysteine 260.

[4Fe-4S] cluster is required as a cofactor. It depends on [3Fe-4S] cluster as a cofactor.

It localises to the cell membrane. It catalyses the reaction nitrate + a quinol = a quinone + nitrite + H2O. The beta chain is an electron transfer unit containing four cysteine clusters involved in the formation of iron-sulfur centers. Electrons are transferred from the gamma chain to the molybdenum cofactor of the alpha subunit. This Bacillus subtilis (strain 168) protein is Nitrate reductase beta chain (narH).